Reading from the N-terminus, the 380-residue chain is Bifunctional dihydropteroate synthase/dihydropteroate reductase (380 aa).

The interval 1 to 104 (MIVKRLNPDA…SQPFGLKHLA (104 aa)) is dihydropteroate reductase. The dihydropteroate synthase stretch occupies residues 105–380 (QELKSHLKAP…KVFKSLEETD (276 aa)). Residues 119–371 (PQIMAVLNLT…DIDEHIDLIK (253 aa)) enclose the Pterin-binding domain. Asn126 lines the Mg(2+) pocket. Residues Asp202, Asn221, Asp289, Lys325, and 359–361 (RVH) each bind (7,8-dihydropterin-6-yl)methyl diphosphate.

The protein in the C-terminal section; belongs to the DHPS family. FAD serves as cofactor. Requires FMN as cofactor. Mg(2+) is required as a cofactor.

It carries out the reaction (7,8-dihydropterin-6-yl)methyl diphosphate + 4-aminobenzoate = 7,8-dihydropteroate + diphosphate. The enzyme catalyses (6S)-5,6,7,8-tetrahydropteroate + NAD(+) = 7,8-dihydropteroate + NADH + H(+). It functions in the pathway cofactor biosynthesis; tetrahydrofolate biosynthesis; 7,8-dihydrofolate from 2-amino-4-hydroxy-6-hydroxymethyl-7,8-dihydropteridine diphosphate and 4-aminobenzoate: step 1/2. Bifunctional enzyme that catalyzes the formation of dihydropteroate, the immediate precursor of folic acid and the reduction of dihydropteroate to tetrahydropteroate. This is Bifunctional dihydropteroate synthase/dihydropteroate reductase from Helicobacter pylori (strain ATCC 700392 / 26695) (Campylobacter pylori).